Here is a 152-residue protein sequence, read N- to C-terminus: Large ribosomal subunit protein bL9 (152 aa).

This sequence belongs to the bacterial ribosomal protein bL9 family.

Its function is as follows. Binds to the 23S rRNA. The chain is Large ribosomal subunit protein bL9 from Mycobacterium marinum (strain ATCC BAA-535 / M).